The sequence spans 214 residues: Ras-related protein RABA5c (214 aa).

19–26 (GDSAVGKS) provides a ligand contact to GTP. The Effector region signature appears at 41–49 (SKATIGVEF). GTP-binding positions include 67 to 71 (DTAGQ), 125 to 128 (NKCD), and 155 to 156 (SA). Residues C211 and C212 are each lipidated (S-geranylgeranyl cysteine).

Belongs to the small GTPase superfamily. Rab family. In terms of assembly, interacts (via C-terminus) with GDI1. Interacts with PUX8/SAY1. As to expression, expressed in roots and actively dividing cells.

The protein localises to the golgi apparatus membrane. It is found in the golgi apparatus. The protein resides in the trans-Golgi network membrane. It localises to the cell membrane. Its function is as follows. Intracellular vesicle trafficking and protein transport. Binds GTP and GDP and possesses intrinsic GTPase activity. In Arabidopsis thaliana (Mouse-ear cress), this protein is Ras-related protein RABA5c (RABA5C).